A 128-amino-acid polypeptide reads, in one-letter code: NADH dehydrogenase [ubiquinone] 1 beta subcomplex subunit 6 (128 aa).

Thr-2 is subject to N-acetylthreonine. Lys-24 carries the N6-acetyllysine modification. The chain crosses the membrane as a helical span at residues 68-86 (SIFVFTHVLVPVWIIHYYM).

This sequence belongs to the complex I NDUFB6 subunit family. Complex I is composed of 45 different subunits.

The protein resides in the mitochondrion inner membrane. Accessory subunit of the mitochondrial membrane respiratory chain NADH dehydrogenase (Complex I), that is believed not to be involved in catalysis. Complex I functions in the transfer of electrons from NADH to the respiratory chain. The immediate electron acceptor for the enzyme is believed to be ubiquinone. The sequence is that of NADH dehydrogenase [ubiquinone] 1 beta subcomplex subunit 6 (NDUFB6) from Pan troglodytes (Chimpanzee).